A 235-amino-acid chain; its full sequence is Small ribosomal subunit protein uS3 (235 aa).

The KH type-2 domain maps to 39-107 (VRQFLNKELA…PAQINIAEVK (69 aa)). The segment covering 215 to 226 (AQQPEQQPATPK) has biased composition (low complexity). The interval 215-235 (AQQPEQQPATPKKAPRGKGRK) is disordered.

Belongs to the universal ribosomal protein uS3 family. In terms of assembly, part of the 30S ribosomal subunit. Forms a tight complex with proteins S10 and S14.

Binds the lower part of the 30S subunit head. Binds mRNA in the 70S ribosome, positioning it for translation. This is Small ribosomal subunit protein uS3 from Histophilus somni (strain 129Pt) (Haemophilus somnus).